Reading from the N-terminus, the 255-residue chain is uncharacterized protein (255 aa).

It belongs to the methyltransferase superfamily.

This is an uncharacterized protein from Mycolicibacterium gilvum (strain PYR-GCK) (Mycobacterium gilvum (strain PYR-GCK)).